The following is a 781-amino-acid chain: uncharacterized protein (781 aa).

Disordered regions lie at residues M1–D27 and N56–H268. Over residues E11–D27 the composition is skewed to acidic residues. The span at L57–K73 shows a compositional bias: basic and acidic residues. Basic residues predominate over residues K80–K94. A compositionally biased stretch (acidic residues) spans S99–Y116. Basic and acidic residues-rich tracts occupy residues D123–N144, E170–V188, K216–N227, and D251–H268. Positions N616–N655 form a coiled coil.

This is an uncharacterized protein from Plasmodium falciparum (isolate 3D7).